The primary structure comprises 1260 residues: Phosphatidylinositol 3,4,5-trisphosphate 5-phosphatase 2 (1260 aa).

An SH2 domain is found at 25–121; it reads WYHRDLSRAA…GLVCALLLPV (97 aa). Residues 126-136 show a composition bias toward basic and acidic residues; it reads ELDPPDERDAS. A disordered region spans residues 126-178; it reads ELDPPDERDASDGEDEKPPLPPRSGTSVSAPLGPSSPPAAPEPPTPAVESAPN. Ser-136 carries the phosphoserine modification. The span at 159 to 171 shows a compositional bias: pro residues; sequence PSSPPAAPEPPTP. Residues Ser-243 and Ser-355 each carry the phosphoserine modification. A Phosphotyrosine modification is found at Tyr-888. Ser-892 is modified (phosphoserine). The tract at residues 899 to 1120 is disordered; that stretch reads GAKSKAPSVS…FLGEAAGGDD (222 aa). Residues 940-952 are compositionally biased toward pro residues; the sequence is PPPTGRPPAPPRA. The SH3-binding signature appears at 946–951; sequence PPAPPR. Positions 953-967 are enriched in basic and acidic residues; sequence APREEPLTPRLKPEG. Thr-960 carries the phosphothreonine modification. The NPXY motif motif lies at 985–988; the sequence is NPAY. Tyr-988 carries the phosphotyrosine modification. Composition is skewed to pro residues over residues 998–1013, 1050–1061, and 1090–1108; these read LLPP…PVPP, LPPPDFPPPPLP, and LPPP…PLPP. Phosphoserine is present on Ser-1133. The residue at position 1164 (Tyr-1164) is a Phosphotyrosine. Residues 1181-1200 form a disordered region; the sequence is EDLAEEAPCPQAGRTGGLGE. One can recognise an SAM domain in the interval 1198-1260; that stretch reads LGEAGMGAWL…LLLDTLQLSK (63 aa). Position 1259 is a phosphoserine (Ser-1259).

The protein belongs to the inositol 1,4,5-trisphosphate 5-phosphatase family. Interacts with tyrosine phosphorylated form of SHC1. Interacts with EGFR. Upon stimulation by the EGF signaling pathway, it forms a complex with SHC1 and EGFR. Interacts with cytoskeletal protein SORBS3/vinexin, promoting its localization to the periphery of cells. Forms a complex with filamin (FLNA or FLNB), actin, GPIb (GP1BA or GP1BB) that regulates cortical and submembraneous actin. Interacts with c-Met/MET, when c-Met/MET is phosphorylated on 'Tyr-1356'. Interacts with p130Cas/BCAR1. Interacts with CENTD3/ARAP3 via its SAM domain. Interacts with c-Cbl/CBL and CAP/SORBS1. Interacts with activated EPHA2 receptor. Interacts with receptor FCGR2A. Interacts with receptor FCGR2B. Interacts with tyrosine kinase ABL1. Interacts with tyrosine kinase TEC. Interacts with CSF1R. Interacts (via N-terminus) with SH3YL1 (via SH3 domain). Interacts with FCRL6 (tyrosine phosphorylated form). Interacts (via SH2 domain) with tyrosine phosphorylated KLRC1 (via ITIM). Interacts with NEDD9/HEF1. In terms of processing, tyrosine phosphorylated by the members of the SRC family after exposure to a diverse array of extracellular stimuli such as insulin, growth factors such as EGF or PDGF, chemokines, integrin ligands and hypertonic and oxidative stress. May be phosphorylated upon IgG receptor FCGR2B-binding. Phosphorylated at Tyr-988 following cell attachment and spreading. Phosphorylated at Tyr-1164 following EGF signaling pathway stimulation. As to expression, expressed abundantly in skeletal muscle tissue.

It localises to the cytoplasm. It is found in the cytosol. The protein resides in the cytoskeleton. Its subcellular location is the membrane. The protein localises to the cell projection. It localises to the filopodium. It is found in the lamellipodium. The protein resides in the basal cell membrane. Its subcellular location is the nucleus. The protein localises to the nucleus speckle. It localises to the spindle pole. It carries out the reaction a 1,2-diacyl-sn-glycero-3-phospho-(1D-myo-inositol-3,4,5-trisphosphate) + H2O = a 1,2-diacyl-sn-glycero-3-phospho-(1D-myo-inositol-3,4-bisphosphate) + phosphate. The catalysed reaction is 1,2-dioctanoyl-sn-glycero-3-phospho-(1D-myo-inositol-3,4,5-trisphosphate) + H2O = 1,2-dioctanoyl-sn-glycero-3-phospho-(1D-myo-inositol-3,4-bisphosphate) + phosphate. The enzyme catalyses 1,2-dihexadecanoyl-sn-glycero-3-phospho-(1D-myo-inositol-3,4,5-trisphosphate) + H2O = 1,2-dihexadecanoyl-sn-glycero-3-phospho-(1D-myo-inositol-3,4-bisphosphate) + phosphate. With respect to regulation, activated upon translocation to the sites of synthesis of PtdIns(3,4,5)P3 in the membrane. Enzymatic activity is enhanced in the presence of phosphatidylserine. Its function is as follows. Phosphatidylinositol (PtdIns) phosphatase that specifically hydrolyzes the 5-phosphate of phosphatidylinositol-3,4,5-trisphosphate (PtdIns(3,4,5)P3) to produce PtdIns(3,4)P2, thereby negatively regulating the PI3K (phosphoinositide 3-kinase) pathways. Required for correct mitotic spindle orientation and therefore progression of mitosis. Plays a central role in regulation of PI3K-dependent insulin signaling, although the precise molecular mechanisms and signaling pathways remain unclear. While overexpression reduces both insulin-stimulated MAP kinase and Akt activation, its absence does not affect insulin signaling or GLUT4 trafficking. Confers resistance to dietary obesity. May act by regulating AKT2, but not AKT1, phosphorylation at the plasma membrane. Part of a signaling pathway that regulates actin cytoskeleton remodeling. Required for the maintenance and dynamic remodeling of actin structures as well as in endocytosis, having a major impact on ligand-induced EGFR internalization and degradation. Participates in regulation of cortical and submembraneous actin by hydrolyzing PtdIns(3,4,5)P3 thereby regulating membrane ruffling. Regulates cell adhesion and cell spreading. Required for HGF-mediated lamellipodium formation, cell scattering and spreading. Acts as a negative regulator of EPHA2 receptor endocytosis by inhibiting via PI3K-dependent Rac1 activation. Acts as a regulator of neuritogenesis by regulating PtdIns(3,4,5)P3 level and is required to form an initial protrusive pattern, and later, maintain proper neurite outgrowth. Acts as a negative regulator of the FC-gamma-RIIA receptor (FCGR2A). Mediates signaling from the FC-gamma-RIIB receptor (FCGR2B), playing a central role in terminating signal transduction from activating immune/hematopoietic cell receptor systems. Involved in EGF signaling pathway. Upon stimulation by EGF, it is recruited by EGFR and dephosphorylates PtdIns(3,4,5)P3. Plays a negative role in regulating the PI3K-PKB pathway, possibly by inhibiting PKB activity. Down-regulates Fc-gamma-R-mediated phagocytosis in macrophages independently of INPP5D/SHIP1. In macrophages, down-regulates NF-kappa-B-dependent gene transcription by regulating macrophage colony-stimulating factor (M-CSF)-induced signaling. Plays a role in the localization of AURKA and NEDD9/HEF1 to the basolateral membrane at interphase in polarized cysts, thereby mediates cell cycle homeostasis, cell polarization and cilia assembly. Additionally promotion of cilia growth is also facilitated by hydrolysis of (PtdIns(3,4,5)P3) to PtdIns(3,4)P2. Promotes formation of apical membrane-initiation sites during the initial stages of lumen formation via Rho family-induced actin filament organization and CTNNB1 localization to cell-cell contacts. May also hydrolyze PtdIns(1,3,4,5)P4, and could thus affect the levels of the higher inositol polyphosphates like InsP6. Involved in endochondral ossification. This chain is Phosphatidylinositol 3,4,5-trisphosphate 5-phosphatase 2, found in Sus scrofa (Pig).